Consider the following 493-residue polypeptide: MTKAISMDALLSPWVDCPSLASVLVSELELDSRKVQPGTTFVALVGHVVDGRKFIASAIEKGANAVIAQACDVKAHGTIDIIDDIPVVYLDALDKCLSEIAGQLYTYPDMKLIGVTGTNGKTTITQLIAQWIGLVGSKAAVMGTTGNGFLDDLKEAANTTGNAVEIQHTLASLAEQQAQYTALEVSSHGLIQGRVKSLSFAAGVFTNLSRDHLDYHGTMEEYANAKLTLFTQHQCAQAIINVDDEVGAAWAKQLTNAIAVSLAPTTEFEHALWASQVAYAESGITIRFDGQFGEGTLHAPLIGEFNAANLMLAFATLLSLGFDKSDLLATAAQLQPVLGRMELFQAEHRAKVVVDYAHTPDALEKALQALRVHCDGQLWAIFGCGGDRDAGKRPMMAEIAERLGDKVVLTDDNPRSEDPVLIVKDMLAGLSKPAEAIVQHDRFKALFYALENAAPQDIILLAGKGHEDYQIRNGETIHYSDRESAMQLLGLSS.

Leu-30 and Ser-32 together coordinate UDP-N-acetyl-alpha-D-muramoyl-L-alanyl-D-glutamate. Position 117–123 (117–123 (GTNGKTT)) interacts with ATP. UDP-N-acetyl-alpha-D-muramoyl-L-alanyl-D-glutamate-binding positions include Asn-158, 159 to 160 (TT), Ser-186, Gln-192, and Arg-194. The residue at position 226 (Lys-226) is an N6-carboxylysine. Residues Arg-388, 412–415 (DNPR), Gly-463, and Glu-467 contribute to the meso-2,6-diaminopimelate site. The Meso-diaminopimelate recognition motif signature appears at 412–415 (DNPR).

It belongs to the MurCDEF family. MurE subfamily. The cofactor is Mg(2+). Post-translationally, carboxylation is probably crucial for Mg(2+) binding and, consequently, for the gamma-phosphate positioning of ATP.

It localises to the cytoplasm. The catalysed reaction is UDP-N-acetyl-alpha-D-muramoyl-L-alanyl-D-glutamate + meso-2,6-diaminopimelate + ATP = UDP-N-acetyl-alpha-D-muramoyl-L-alanyl-gamma-D-glutamyl-meso-2,6-diaminopimelate + ADP + phosphate + H(+). The protein operates within cell wall biogenesis; peptidoglycan biosynthesis. Functionally, catalyzes the addition of meso-diaminopimelic acid to the nucleotide precursor UDP-N-acetylmuramoyl-L-alanyl-D-glutamate (UMAG) in the biosynthesis of bacterial cell-wall peptidoglycan. The sequence is that of UDP-N-acetylmuramoyl-L-alanyl-D-glutamate--2,6-diaminopimelate ligase from Vibrio parahaemolyticus serotype O3:K6 (strain RIMD 2210633).